The sequence spans 360 residues: Photosystem II protein D1 2 (360 aa).

Transmembrane regions (helical) follow at residues 29 to 46 (YVGW…TATT), 118 to 133 (HFLI…EWEL), and 142 to 156 (WICV…AATA). His118 serves as a coordination point for chlorophyll a. Pheophytin a is bound at residue Tyr126. [CaMn4O5] cluster contacts are provided by Asp170 and Glu189. A helical transmembrane segment spans residues 197 to 218 (FHMLGVAGVFGGSLFSAMHGSL). His198 contacts chlorophyll a. Residues His215 and 264–265 (SF) each bind a quinone. His215 is a Fe cation binding site. Residue His272 participates in Fe cation binding. The chain crosses the membrane as a helical span at residues 274–288 (FLGAWPVVGIWFTAL). Positions 332, 333, 342, and 344 each coordinate [CaMn4O5] cluster. Residues 345–360 (AGEQAPVALQAPAING) constitute a propeptide that is removed on maturation.

It belongs to the reaction center PufL/M/PsbA/D family. In terms of assembly, PSII is composed of 1 copy each of membrane proteins PsbA, PsbB, PsbC, PsbD, PsbE, PsbF, PsbH, PsbI, PsbJ, PsbK, PsbL, PsbM, PsbT, PsbX, PsbY, PsbZ, Psb30/Ycf12, peripheral proteins PsbO, CyanoQ (PsbQ), PsbU, PsbV and a large number of cofactors. It forms dimeric complexes. The D1/D2 heterodimer binds P680, chlorophylls that are the primary electron donor of PSII, and subsequent electron acceptors. It shares a non-heme iron and each subunit binds pheophytin, quinone, additional chlorophylls, carotenoids and lipids. D1 provides most of the ligands for the Mn4-Ca-O5 cluster of the oxygen-evolving complex (OEC). There is also a Cl(-1) ion associated with D1 and D2, which is required for oxygen evolution. The PSII complex binds additional chlorophylls, carotenoids and specific lipids. is required as a cofactor. Post-translationally, tyr-161 forms a radical intermediate that is referred to as redox-active TyrZ, YZ or Y-Z. C-terminally processed by CtpA; processing is essential to allow assembly of the oxygen-evolving complex and thus photosynthetic growth.

The protein localises to the cellular thylakoid membrane. It carries out the reaction 2 a plastoquinone + 4 hnu + 2 H2O = 2 a plastoquinol + O2. In terms of biological role, photosystem II (PSII) is a light-driven water:plastoquinone oxidoreductase that uses light energy to abstract electrons from H(2)O, generating O(2) and a proton gradient subsequently used for ATP formation. It consists of a core antenna complex that captures photons, and an electron transfer chain that converts photonic excitation into a charge separation. The D1/D2 (PsbA/PsbD) reaction center heterodimer binds P680, the primary electron donor of PSII as well as several subsequent electron acceptors. The chain is Photosystem II protein D1 2 from Picosynechococcus sp. (strain ATCC 27264 / PCC 7002 / PR-6) (Agmenellum quadruplicatum).